The chain runs to 400 residues: Phosphoglycerate kinase (400 aa).

Residues Asp-21–Asn-23, Arg-37, His-60–Arg-63, Arg-119, and Arg-152 contribute to the substrate site. ATP contacts are provided by residues Lys-205, Gly-296, Glu-327, and Gly-353–Thr-356.

It belongs to the phosphoglycerate kinase family. As to quaternary structure, monomer.

The protein localises to the cytoplasm. The enzyme catalyses (2R)-3-phosphoglycerate + ATP = (2R)-3-phospho-glyceroyl phosphate + ADP. The protein operates within carbohydrate degradation; glycolysis; pyruvate from D-glyceraldehyde 3-phosphate: step 2/5. In Aliarcobacter butzleri (strain RM4018) (Arcobacter butzleri), this protein is Phosphoglycerate kinase.